Reading from the N-terminus, the 154-residue chain is Xanthine-guanine phosphoribosyltransferase (154 aa).

5-phospho-alpha-D-ribose 1-diphosphate contacts are provided by residues 37–38 (RG), R69, and 88–96 (EDLVDSGDT). R69 provides a ligand contact to GMP. D89 lines the Mg(2+) pocket. Guanine-binding residues include D92 and I135. Residues D92 and I135 each coordinate xanthine. Residues 92–96 (DSGDT) and 134–135 (WI) each bind GMP.

The protein belongs to the purine/pyrimidine phosphoribosyltransferase family. XGPT subfamily. In terms of assembly, homotetramer. Requires Mg(2+) as cofactor.

The protein resides in the cell inner membrane. The enzyme catalyses GMP + diphosphate = guanine + 5-phospho-alpha-D-ribose 1-diphosphate. It catalyses the reaction XMP + diphosphate = xanthine + 5-phospho-alpha-D-ribose 1-diphosphate. The catalysed reaction is IMP + diphosphate = hypoxanthine + 5-phospho-alpha-D-ribose 1-diphosphate. It participates in purine metabolism; GMP biosynthesis via salvage pathway; GMP from guanine: step 1/1. Its pathway is purine metabolism; XMP biosynthesis via salvage pathway; XMP from xanthine: step 1/1. Functionally, purine salvage pathway enzyme that catalyzes the transfer of the ribosyl-5-phosphate group from 5-phospho-alpha-D-ribose 1-diphosphate (PRPP) to the N9 position of the 6-oxopurines guanine and xanthine to form the corresponding ribonucleotides GMP (guanosine 5'-monophosphate) and XMP (xanthosine 5'-monophosphate), with the release of PPi. To a lesser extent, also acts on hypoxanthine. The chain is Xanthine-guanine phosphoribosyltransferase from Vibrio vulnificus (strain CMCP6).